Here is a 514-residue protein sequence, read N- to C-terminus: ATP synthase subunit alpha (514 aa).

170-177 (GDRQIGKT) provides a ligand contact to ATP.

This sequence belongs to the ATPase alpha/beta chains family. In terms of assembly, F-type ATPases have 2 components, CF(1) - the catalytic core - and CF(0) - the membrane proton channel. CF(1) has five subunits: alpha(3), beta(3), gamma(1), delta(1), epsilon(1). CF(0) has three main subunits: a(1), b(2) and c(9-12). The alpha and beta chains form an alternating ring which encloses part of the gamma chain. CF(1) is attached to CF(0) by a central stalk formed by the gamma and epsilon chains, while a peripheral stalk is formed by the delta and b chains.

The protein localises to the cell inner membrane. It carries out the reaction ATP + H2O + 4 H(+)(in) = ADP + phosphate + 5 H(+)(out). Functionally, produces ATP from ADP in the presence of a proton gradient across the membrane. The alpha chain is a regulatory subunit. This Pseudomonas savastanoi pv. phaseolicola (strain 1448A / Race 6) (Pseudomonas syringae pv. phaseolicola (strain 1448A / Race 6)) protein is ATP synthase subunit alpha.